The following is a 247-amino-acid chain: 2,3-bisphosphoglycerate-dependent phosphoglycerate mutase (247 aa).

Substrate is bound by residues 8-15 (RHGESVWN), 21-22 (TG), arginine 60, 87-90 (ERHY), lysine 98, 114-115 (RR), and 183-184 (GN). The active-site Tele-phosphohistidine intermediate is histidine 9. The active-site Proton donor/acceptor is the glutamate 87.

Belongs to the phosphoglycerate mutase family. BPG-dependent PGAM subfamily. In terms of assembly, homodimer.

The catalysed reaction is (2R)-2-phosphoglycerate = (2R)-3-phosphoglycerate. It functions in the pathway carbohydrate degradation; glycolysis; pyruvate from D-glyceraldehyde 3-phosphate: step 3/5. Its function is as follows. Catalyzes the interconversion of 2-phosphoglycerate and 3-phosphoglycerate. The protein is 2,3-bisphosphoglycerate-dependent phosphoglycerate mutase of Geobacter sulfurreducens (strain ATCC 51573 / DSM 12127 / PCA).